The sequence spans 402 residues: NAD-dependent protein deacetylase sirtuin-7 (402 aa).

The tract at residues 1-23 (MAAGGGLSRSERKAAERVRRLRE) is disordered. Positions 9-23 (RSERKAAERVRRLRE) are enriched in basic and acidic residues. The Deacetylase sirtuin-type domain occupies 83 to 330 (PEELRRKVRE…QLLMNELGLE (248 aa)). Residues 108–127 (GAGI…NGVW) and 168–171 (QNCD) contribute to the NAD(+) site. The active-site Proton acceptor is His188. Residues Cys196, Cys199, Cys226, and Cys229 each coordinate Zn(2+). Residues 269–271 (GSS), 298–300 (NLQ), and Cys316 contribute to the NAD(+) site. Positions 355 to 402 (SHSRKSLCRSREEAPPGDQSDPLASAPPILGGWFGRGCAKRAKRKKVA) are disordered. Residue Arg390 is modified to Asymmetric dimethylarginine; alternate. An Omega-N-methylarginine; alternate modification is found at Arg390. The span at 392–402 (CAKRAKRKKVA) shows a compositional bias: basic residues.

The protein belongs to the sirtuin family. Class IV subfamily. In terms of assembly, interacts with UBTF and the RNA polymerase I complex. Interacts with components of the B-WICH complex, such as MYBBP1A, SMARCA5/SNF2H and BAZ1B/WSTF. Interacts with ELK4, leading to stabilization at target promoters for H3K18Ac deacetylation. Interacts with histone H2A and/or histone H2B. Interacts with DNMT1. Interacts with SIRT1. Zn(2+) is required as a cofactor. In terms of processing, phosphorylated during mitosis. Methylation at Arg-390 by PRMT6 inhibits the H3K18Ac histone deacetylase activity, promoting mitochondria biogenesis and maintaining mitochondria respiration. Post-translationally, ubiquitinated via 'Lys-63'-linked ubiquitin chains. Deubiquitinated by USP7, inhibiting the H3K18Ac histone deacetylase activity and regulating gluconeogenesis. Ubiquitinated by E3 ubiquitin-protein ligase complex containing FBXO7; leading to proteasomal degradation. As to expression, detected in liver, spleen and testis. Detected in embryos.

The protein localises to the nucleus. The protein resides in the nucleolus. It is found in the nucleoplasm. Its subcellular location is the chromosome. It localises to the cytoplasm. The catalysed reaction is N(6)-acetyl-L-lysyl-[protein] + NAD(+) + H2O = 2''-O-acetyl-ADP-D-ribose + nicotinamide + L-lysyl-[protein]. It catalyses the reaction N(6)-glutaryl-L-lysyl-[protein] + NAD(+) + H2O = 2''-O-glutaryl-ADP-D-ribose + nicotinamide + L-lysyl-[protein]. It carries out the reaction N(6)-succinyl-L-lysyl-[protein] + NAD(+) + H2O = 2''-O-succinyl-ADP-D-ribose + nicotinamide + L-lysyl-[protein]. The enzyme catalyses N(6)-propanoyl-L-lysyl-[protein] + NAD(+) + H2O = 3''-O-propanoyl-ADP-D-ribose + nicotinamide + L-lysyl-[protein]. The catalysed reaction is N(6)-decanoyl-L-lysyl-[protein] + NAD(+) + H2O = 2''-O-decanoyl-ADP-D-ribose + nicotinamide + L-lysyl-[protein]. NAD-dependent protein-lysine deacetylase and deacylase activities are activated by nucleic acids. Histone deacetylase activity is activated by DNA. Protein-lysine deacylase activity is activated by RNA. H3K18Ac histone deacetylase activity is inhibited by methylation at Arg-390. H3K18Ac histone deacetylase activity is inhibited by deubiquitination by USP7. In terms of biological role, NAD-dependent protein-lysine deacylase that can act both as a deacetylase or deacylase (desuccinylase, depropionylase and deglutarylase), depending on the context. Also acts as a dedecanoylase. Specifically mediates deacetylation of histone H3 at 'Lys-18' (H3K18Ac). In contrast to other histone deacetylases, displays strong preference for a specific histone mark, H3K18Ac, directly linked to control of gene expression. H3K18Ac is mainly present around the transcription start site of genes and has been linked to activation of nuclear hormone receptors; SIRT7 thereby acts as a transcription repressor. Moreover, H3K18 hypoacetylation has been reported as a marker of malignancy in various cancers and seems to maintain the transformed phenotype of cancer cells. Also able to mediate deacetylation of histone H3 at 'Lys-36' (H3K36Ac) in the context of nucleosomes. Also mediates deacetylation of non-histone proteins, such as ATM, CDK9, DDX21, DDB1, FBL, FKBP5/FKBP51, GABPB1, RAN, RRP9/U3-55K and POLR1E/PAF53. Enriched in nucleolus where it stimulates transcription activity of the RNA polymerase I complex. Acts by mediating the deacetylation of the RNA polymerase I subunit POLR1E/PAF53, thereby promoting the association of RNA polymerase I with the rDNA promoter region and coding region. In response to metabolic stress, SIRT7 is released from nucleoli leading to hyperacetylation of POLR1E/PAF53 and decreased RNA polymerase I transcription. Required to restore the transcription of ribosomal RNA (rRNA) at the exit from mitosis. Promotes pre-ribosomal RNA (pre-rRNA) cleavage at the 5'-terminal processing site by mediating deacetylation of RRP9/U3-55K, a core subunit of the U3 snoRNP complex. Mediates 'Lys-37' deacetylation of Ran, thereby regulating the nuclear export of NF-kappa-B subunit RELA/p65. Acts as a regulator of DNA damage repair by mediating deacetylation of ATM during the late stages of DNA damage response, promoting ATM dephosphorylation and deactivation. May also deacetylate p53/TP53 and promotes cell survival, however such data need additional confirmation. Suppresses the activity of the DCX (DDB1-CUL4-X-box) E3 ubiquitin-protein ligase complexes by mediating deacetylation of DDB1, which prevents the interaction between DDB1 and CUL4 (CUL4A or CUL4B). Activates RNA polymerase II transcription by mediating deacetylation of CDK9, thereby promoting 'Ser-2' phosphorylation of the C-terminal domain (CTD) of RNA polymerase II. Deacetylates FBL, promoting histone-glutamine methyltransferase activity of FBL. Acts as a regulator of mitochondrial function by catalyzing deacetylation of GABPB1. Regulates Akt/AKT1 activity by mediating deacetylation of FKBP5/FKBP51. Required to prevent R-loop-associated DNA damage and transcription-associated genomic instability by mediating deacetylation and subsequent activation of DDX21, thereby overcoming R-loop-mediated stalling of RNA polymerases. In addition to protein deacetylase activity, also acts as protein-lysine deacylase. Acts as a protein depropionylase by mediating depropionylation of Osterix (SP7), thereby regulating bone formation by osteoblasts. Acts as a histone deglutarylase by mediating deglutarylation of histone H4 on 'Lys-91' (H4K91glu); a mark that destabilizes nucleosomes by promoting dissociation of the H2A-H2B dimers from nucleosomes. Acts as a histone desuccinylase: in response to DNA damage, recruited to DNA double-strand breaks (DSBs) and catalyzes desuccinylation of histone H3 on 'Lys-122' (H3K122succ), thereby promoting chromatin condensation and DSB repair. Also promotes DSB repair by promoting H3K18Ac deacetylation, regulating non-homologous end joining (NHEJ). Along with its role in DNA repair, required for chromosome synapsis during prophase I of female meiosis by catalyzing H3K18Ac deacetylation. Involved in transcriptional repression of LINE-1 retrotransposon via H3K18Ac deacetylation, and promotes their association with the nuclear lamina. Required to stabilize ribosomal DNA (rDNA) heterochromatin and prevent cellular senescence induced by rDNA instability. Acts as a negative regulator of SIRT1 by preventing autodeacetylation of SIRT1, restricting SIRT1 deacetylase activity. In Mus musculus (Mouse), this protein is NAD-dependent protein deacetylase sirtuin-7.